A 57-amino-acid polypeptide reads, in one-letter code: Large ribosomal subunit protein bL32 (57 aa).

The segment covering Met-1–Gln-19 has biased composition (basic residues). The disordered stretch occupies residues Met-1–Ala-22.

This sequence belongs to the bacterial ribosomal protein bL32 family.

In Mycobacterium tuberculosis (strain ATCC 25177 / H37Ra), this protein is Large ribosomal subunit protein bL32.